Reading from the N-terminus, the 266-residue chain is Phosphate import ATP-binding protein PstB 1 (266 aa).

Positions 18 to 261 (AQTSNLSFYY…PTNQLTEQYV (244 aa)) constitute an ABC transporter domain. Residue 50–57 (GPSGCGKT) participates in ATP binding.

Belongs to the ABC transporter superfamily. Phosphate importer (TC 3.A.1.7) family. In terms of assembly, the complex is composed of two ATP-binding proteins (PstB), two transmembrane proteins (PstC and PstA) and a solute-binding protein (PstS).

The protein resides in the cell inner membrane. It catalyses the reaction phosphate(out) + ATP + H2O = ADP + 2 phosphate(in) + H(+). Its function is as follows. Part of the ABC transporter complex PstSACB involved in phosphate import. Responsible for energy coupling to the transport system. In Gloeobacter violaceus (strain ATCC 29082 / PCC 7421), this protein is Phosphate import ATP-binding protein PstB 1.